A 462-amino-acid polypeptide reads, in one-letter code: MEEDRRQTDLGTAADIEEAQLAQASPSPAIENETESAAQTQNGATPLKQPKKRFVGRRAATEAAAKNGSSGATGESGAVATAKPRRAPRLLNQVPKEILENPDLKAAISLLPANYNFEIPKTIHRIQTSGSKRVALQMPEGLLLFATTISDILTQFCPGIETLIMGDVTYGACCIDDYTARALGCDLLVHYAHSCLIPVDVTTIKTLYVFVDISIDATHLLASLEHNFASGKTIAVVGTIQFNATIHGVKSSLERGGFRVLVPQIAPLSKGEILGCTSPRLTEDDKIDLILYLGDGRFHLESIMIHNPTIPAYRYDPYSRKLTRETYGHEEMQSLRRTAIHSARSARKWGLILGALGRQGNPHTLGLIEKELKARGIPIVHLLLSEIFPGKLALMSDIECWVQVACPRLSIDWGYAFSRPLLTPYEALVALGEKKDWGDGVYPMDYYGKDGLGRTRPLQIAS.

Residues 1-87 are disordered; the sequence is MEEDRRQTDL…AVATAKPRRA (87 aa). The segment covering 35–44 has biased composition (polar residues); that stretch reads ESAAQTQNGA. Residues C173, C276, and C406 each contribute to the [4Fe-4S] cluster site.

Belongs to the DPH1/DPH2 family. DPH1 subfamily. As to quaternary structure, component of the 2-(3-amino-3-carboxypropyl)histidine synthase complex composed of DPH1, DPH2, DPH3 and a NADH-dependent reductase, predominantly CBR1. [4Fe-4S] cluster is required as a cofactor.

It localises to the cytoplasm. The catalysed reaction is L-histidyl-[translation elongation factor 2] + S-adenosyl-L-methionine = 2-[(3S)-amino-3-carboxypropyl]-L-histidyl-[translation elongation factor 2] + S-methyl-5'-thioadenosine + H(+). It participates in protein modification; peptidyl-diphthamide biosynthesis. Its function is as follows. Catalyzes the first step of diphthamide biosynthesis, a post-translational modification of histidine which occurs in elongation factor 2. DPH1 and DPH2 transfer a 3-amino-3-carboxypropyl (ACP) group from S-adenosyl-L-methionine (SAM) to a histidine residue, the reaction is assisted by a reduction system comprising DPH3 and a NADH-dependent reductase, predominantly CBR1. The polypeptide is 2-(3-amino-3-carboxypropyl)histidine synthase subunit 1 (DPH1) (Gibberella zeae (strain ATCC MYA-4620 / CBS 123657 / FGSC 9075 / NRRL 31084 / PH-1) (Wheat head blight fungus)).